A 240-amino-acid polypeptide reads, in one-letter code: 2-C-methyl-D-erythritol 2,4-cyclodiphosphate synthase, apicoplast (240 aa).

D71 and H73 together coordinate a divalent metal cation. Residues 71 to 73 and 115 to 116 contribute to the 4-CDP-2-C-methyl-D-erythritol 2-phosphate site; these read DIH and HS. Residue H123 participates in a divalent metal cation binding. Residues 137-139, 142-146, 181-187, and 212-214 contribute to the 4-CDP-2-C-methyl-D-erythritol 2-phosphate site; these read DIG, FPDKD, AQVPKIS, and GKT.

It belongs to the IspF family. Homotrimer. Requires a divalent metal cation as cofactor.

It is found in the plastid. Its subcellular location is the apicoplast. The catalysed reaction is 4-CDP-2-C-methyl-D-erythritol 2-phosphate = 2-C-methyl-D-erythritol 2,4-cyclic diphosphate + CMP. Its pathway is isoprenoid biosynthesis; isopentenyl diphosphate biosynthesis via DXP pathway; isopentenyl diphosphate from 1-deoxy-D-xylulose 5-phosphate: step 4/6. Functionally, in the mevalonate-independent isoprenoid biosynthetic pathway, converts 4-diphosphocytidyl-2C-methyl-D-erythritol 2-phosphate into 2C-methyl-D-erythritol 2,4-cyclodiphosphate and CMP. The polypeptide is 2-C-methyl-D-erythritol 2,4-cyclodiphosphate synthase, apicoplast (Plasmodium falciparum (isolate 3D7)).